Here is a 217-residue protein sequence, read N- to C-terminus: Ribosomal RNA small subunit methyltransferase G (217 aa).

S-adenosyl-L-methionine-binding positions include glycine 76, phenylalanine 81, 128–129, and arginine 142; that span reads LE.

This sequence belongs to the methyltransferase superfamily. RNA methyltransferase RsmG family.

The protein resides in the cytoplasm. The enzyme catalyses guanosine(527) in 16S rRNA + S-adenosyl-L-methionine = N(7)-methylguanosine(527) in 16S rRNA + S-adenosyl-L-homocysteine. In terms of biological role, specifically methylates the N7 position of guanine in position 527 of 16S rRNA. This Rhizorhabdus wittichii (strain DSM 6014 / CCUG 31198 / JCM 15750 / NBRC 105917 / EY 4224 / RW1) (Sphingomonas wittichii) protein is Ribosomal RNA small subunit methyltransferase G.